Here is a 321-residue protein sequence, read N- to C-terminus: MRFNLAERILNQDVLSKDEALALFEDETIDTFELLNEAYIIRKHFFGKKVKLNMILNAKSGICSEDCGYCGQSVKMKEKQRYALVEPDKIKAGAQVATENHIGTYCIVMSGRGPTNREVDHICETVHDIKVLHPQLKICACLGLTNEEQAEKLKEAGVDRYNHNLNTSERYHNEVVTTHTYEDRVRTVEIMKANHISPCSGVICGMGETNEDIIDMAFALREIDADSIPINFLHPIKGTKFGGLDLLSPMKCLRIIAMFRLINPSKEIRIAGGREVNLRSLQAIALKAANSIFVGDYLITGGQPNELDYQMIEDLGFEIDG.

In terms of domain architecture, Radical SAM core spans 45 to 271 (FFGKKVKLNM…INPSKEIRIA (227 aa)). The [4Fe-4S] cluster site is built by Cys-63, Cys-67, and Cys-70. Positions 106, 139, 199, and 269 each coordinate [2Fe-2S] cluster.

The protein belongs to the radical SAM superfamily. Biotin synthase family. In terms of assembly, homodimer. Requires [4Fe-4S] cluster as cofactor. [2Fe-2S] cluster is required as a cofactor.

The catalysed reaction is (4R,5S)-dethiobiotin + (sulfur carrier)-SH + 2 reduced [2Fe-2S]-[ferredoxin] + 2 S-adenosyl-L-methionine = (sulfur carrier)-H + biotin + 2 5'-deoxyadenosine + 2 L-methionine + 2 oxidized [2Fe-2S]-[ferredoxin]. It functions in the pathway cofactor biosynthesis; biotin biosynthesis; biotin from 7,8-diaminononanoate: step 2/2. Its function is as follows. Catalyzes the conversion of dethiobiotin (DTB) to biotin by the insertion of a sulfur atom into dethiobiotin via a radical-based mechanism. The protein is Biotin synthase of Staphylococcus haemolyticus (strain JCSC1435).